Reading from the N-terminus, the 230-residue chain is tRNA pseudouridine synthase B (230 aa).

The Nucleophile role is filled by aspartate 45.

It belongs to the pseudouridine synthase TruB family. Type 1 subfamily.

It catalyses the reaction uridine(55) in tRNA = pseudouridine(55) in tRNA. Its function is as follows. Responsible for synthesis of pseudouridine from uracil-55 in the psi GC loop of transfer RNAs. This is tRNA pseudouridine synthase B from Endomicrobium trichonymphae.